The following is a 136-amino-acid chain: Large ribosomal subunit protein uL16 (136 aa).

The protein belongs to the universal ribosomal protein uL16 family. Part of the 50S ribosomal subunit.

Functionally, binds 23S rRNA and is also seen to make contacts with the A and possibly P site tRNAs. This Edwardsiella ictaluri (strain 93-146) protein is Large ribosomal subunit protein uL16.